We begin with the raw amino-acid sequence, 595 residues long: P2X purinoceptor 7 (595 aa).

The Cytoplasmic segment spans residues 1-22; that stretch reads MPACCSWNDVFQYETNKVTRIQ. A lipid anchor (S-palmitoyl cysteine) is attached at C4. Residues 23-46 traverse the membrane as a helical segment; the sequence is SVNYGTIKWILHMTVFSYVSFALM. At 47-328 the chain is on the extracellular side; sequence SDKLYQRKEP…ILVFGTGGKF (282 aa). The N-linked (GlcNAc...) asparagine glycan is linked to N74. 3 cysteine pairs are disulfide-bonded: C119–C168, C129–C152, and C135–C162. Residue R125 is modified to ADP-ribosylarginine. N-linked (GlcNAc...) asparagine glycosylation occurs at N187. ATP is bound at residue T189. N-linked (GlcNAc...) asparagine glycans are attached at residues N202 and N213. Cysteines 216 and 226 form a disulfide. An N-linked (GlcNAc...) asparagine glycan is attached at N241. The cysteines at positions 260 and 269 are disulfide-linked. N-linked (GlcNAc...) asparagine glycosylation occurs at N284. ATP contacts are provided by R294 and K311. A helical transmembrane segment spans residues 329–353; it reads DIIQLVVYIGSTLSYFGLATVCIDL. Residue S342 participates in Na(+) binding. Over 354–595 the chain is Cytoplasmic; that stretch reads IINTYASTCC…GQYSGFKYPY (242 aa). The C-cys anchor stretch occupies residues 360-377; the sequence is STCCRSRVYPSCKCCEPC. S-palmitoyl cysteine attachment occurs at residues C362, C363, C374, and C377. A cytoplasmic ballast region spans residues 395 to 595; that stretch reads KPTLKYVSFV…GQYSGFKYPY (201 aa). Residues C479, C499, and C506 each coordinate Zn(2+). Residues R546, H547, Y550, and A567 each coordinate GTP. Zn(2+) is bound at residue C572. K583, S589, and G590 together coordinate GTP.

It belongs to the P2X receptor family. Homotrimer. Interacts with LAMA3, ITGB2, ACTB, ACTN4, SVIL, MPP3, HSPA1, HSPCB, HSPA8, PIK230 and PTPRB. Interacts (via C-terminus) with EMP2. In terms of processing, phosphorylation results in its inactivation. Post-translationally, ADP-ribosylation at Arg-125 is necessary and sufficient to activate P2RX7 and gate the channel. Palmitoylation of several cysteines in the C-terminal cytoplasmic tail is required for efficient localization to cell surface. Palmitoylation prevents channel desensitization by physically anchoring the palmitoylated groups to the membrane.

The protein localises to the cell membrane. It carries out the reaction Ca(2+)(in) = Ca(2+)(out). It catalyses the reaction K(+)(in) = K(+)(out). The enzyme catalyses Na(+)(in) = Na(+)(out). Activated by high extracellular ATP levels (0.1-2.5 mM). The synthetic analog 2'(3')-O-(4-benzoylbenzoyl)ATP (BzATP) acts as a potent agonist. Does not undergo desensitization, instead, undergoes a facilitation process where currents progressively increase with repetitive or prolonged agonist application. Palmitoylation prevents channel desensitization. The permeability of the P2RX7 channel is modulated by the amount of cholesterol in the plasma membrane. ATP-gated nonselective transmembrane cation channel that requires high millimolar concentrations of ATP for activation. Upon ATP binding, it rapidly opens to allow the influx of small cations Na(+) and Ca(2+), and the K(+) efflux. Also has the ability to form a large pore in the cell membrane, allowing the passage of large cationic molecules. In microglia, may mediate the transmembrane transport of exogenous NADPH. In immune cells, P2RX7 acts as a molecular sensor in pathological inflammatory states by detecting and responding to high local concentrations of extracellar ATP. In microglial cells, P2RX7 activation leads to the release of pro-inflammatory cytokines, such as IL-1beta and IL-18, through the activation of the NLRP3 inflammasome and caspase-1. Cooperates with KCNK6 to activate NLRP3 inflammasome. Activates death pathways leading to apoptosis and autophagy. Activates death pathways leading to pyroptosis. In terms of biological role, has a higher affinity for ATP, slower deactivation and an increased propensity to form large cation-permeable pores. The sequence is that of P2X purinoceptor 7 (P2rx7) from Rattus norvegicus (Rat).